The following is a 34-amino-acid chain: Brevinin-2Rf (34 aa).

An intrachain disulfide couples Cys28 to Cys34.

In terms of tissue distribution, expressed by the skin glands.

It is found in the secreted. Its function is as follows. Antimicrobial peptide. The sequence is that of Brevinin-2Rf from Pelophylax ridibundus (Marsh frog).